We begin with the raw amino-acid sequence, 359 residues long: Fructose-bisphosphate aldolase (359 aa).

Serine 50 contributes to the D-glyceraldehyde 3-phosphate binding site. Aspartate 83 acts as the Proton donor in catalysis. Zn(2+)-binding residues include histidine 84, aspartate 105, glutamate 142, and histidine 198. Glycine 199 contributes to the dihydroxyacetone phosphate binding site. Residue histidine 232 coordinates Zn(2+). Residues 233-235 and 275-278 each bind dihydroxyacetone phosphate; these read GSS and NIDT.

It belongs to the class II fructose-bisphosphate aldolase family. In terms of assembly, homodimer. Requires Zn(2+) as cofactor.

The enzyme catalyses beta-D-fructose 1,6-bisphosphate = D-glyceraldehyde 3-phosphate + dihydroxyacetone phosphate. It participates in carbohydrate biosynthesis; Calvin cycle. The protein operates within carbohydrate degradation; glycolysis; D-glyceraldehyde 3-phosphate and glycerone phosphate from D-glucose: step 4/4. Functionally, catalyzes the aldol condensation of dihydroxyacetone phosphate (DHAP or glycerone-phosphate) with glyceraldehyde 3-phosphate (G3P) to form fructose 1,6-bisphosphate (FBP) in gluconeogenesis and the reverse reaction in glycolysis. The protein is Fructose-bisphosphate aldolase (cbbA) of Sinorhizobium medicae (strain WSM419) (Ensifer medicae).